Consider the following 390-residue polypeptide: Mevalonate kinase (390 aa).

ATP is bound by residues Lys-16, Ser-130, and 135 to 141 (GAGLGSS). Mg(2+) contacts are provided by Ser-141 and Glu-193. Asp-204 functions as the Proton acceptor in the catalytic mechanism.

It belongs to the GHMP kinase family. Mevalonate kinase subfamily. Mg(2+) is required as a cofactor.

It localises to the cytoplasm. The enzyme catalyses (R)-mevalonate + ATP = (R)-5-phosphomevalonate + ADP + H(+). It functions in the pathway isoprenoid biosynthesis; isopentenyl diphosphate biosynthesis via mevalonate pathway; isopentenyl diphosphate from (R)-mevalonate: step 1/3. Functionally, catalyzes the phosphorylation of mevalonate to mevalonate 5-phosphate, a key step in isoprenoid biosynthesis. The polypeptide is Mevalonate kinase (Dictyostelium discoideum (Social amoeba)).